The primary structure comprises 196 residues: MLDRIKACFTESIQTQIAAAEALPDAISRAAMTLVQSLLNGNKILCCGNGTSAANAQHFAASMINRFETERPGLPAIALNTDNVVLTAIANDRLHDEIYAKQVRALGHAGDVLLAISTRGNSRDIVKAVEAAVTRDMTIVALTGYDGGELAGLLGQQDVEIRIPSHRSARIQEMHMLTVNCLCDLIDNTLFPHQDD.

The SIS domain occupies 34–196 (LVQSLLNGNK…DNTLFPHQDD (163 aa)).

The protein belongs to the SIS family. DiaA subfamily. In terms of assembly, homotetramer; dimer of dimers.

Required for the timely initiation of chromosomal replication via direct interactions with the DnaA initiator protein. The chain is DnaA initiator-associating protein DiaA from Klebsiella pneumoniae (strain 342).